The following is a 451-amino-acid chain: Bifunctional protein GlmU (451 aa).

The segment at 1 to 232 (MTARSSLTIV…EDEVRGINTK (232 aa)) is pyrophosphorylase. UDP-N-acetyl-alpha-D-glucosamine-binding positions include 11-14 (LAAG), lysine 25, glutamine 78, and 83-84 (GT). Aspartate 108 lines the Mg(2+) pocket. Residues glycine 144, glutamate 158, asparagine 173, and asparagine 230 each contribute to the UDP-N-acetyl-alpha-D-glucosamine site. Asparagine 230 contributes to the Mg(2+) binding site. A linker region spans residues 233–253 (AQLAEAESVMQARLRKAAMEA). The segment at 254 to 451 (GVTLIAPETV…MKTRGKKPEK (198 aa)) is N-acetyltransferase. UDP-N-acetyl-alpha-D-glucosamine is bound by residues arginine 319 and lysine 337. Histidine 349 (proton acceptor) is an active-site residue. Positions 352 and 363 each coordinate UDP-N-acetyl-alpha-D-glucosamine. Acetyl-CoA contacts are provided by residues alanine 366, 372–373 (NY), serine 409, and arginine 426.

In the N-terminal section; belongs to the N-acetylglucosamine-1-phosphate uridyltransferase family. It in the C-terminal section; belongs to the transferase hexapeptide repeat family. As to quaternary structure, homotrimer. Requires Mg(2+) as cofactor.

The protein resides in the cytoplasm. It catalyses the reaction alpha-D-glucosamine 1-phosphate + acetyl-CoA = N-acetyl-alpha-D-glucosamine 1-phosphate + CoA + H(+). The catalysed reaction is N-acetyl-alpha-D-glucosamine 1-phosphate + UTP + H(+) = UDP-N-acetyl-alpha-D-glucosamine + diphosphate. The protein operates within nucleotide-sugar biosynthesis; UDP-N-acetyl-alpha-D-glucosamine biosynthesis; N-acetyl-alpha-D-glucosamine 1-phosphate from alpha-D-glucosamine 6-phosphate (route II): step 2/2. It participates in nucleotide-sugar biosynthesis; UDP-N-acetyl-alpha-D-glucosamine biosynthesis; UDP-N-acetyl-alpha-D-glucosamine from N-acetyl-alpha-D-glucosamine 1-phosphate: step 1/1. It functions in the pathway bacterial outer membrane biogenesis; LPS lipid A biosynthesis. Catalyzes the last two sequential reactions in the de novo biosynthetic pathway for UDP-N-acetylglucosamine (UDP-GlcNAc). The C-terminal domain catalyzes the transfer of acetyl group from acetyl coenzyme A to glucosamine-1-phosphate (GlcN-1-P) to produce N-acetylglucosamine-1-phosphate (GlcNAc-1-P), which is converted into UDP-GlcNAc by the transfer of uridine 5-monophosphate (from uridine 5-triphosphate), a reaction catalyzed by the N-terminal domain. In Bradyrhizobium diazoefficiens (strain JCM 10833 / BCRC 13528 / IAM 13628 / NBRC 14792 / USDA 110), this protein is Bifunctional protein GlmU.